Reading from the N-terminus, the 710-residue chain is Nucleolar complex protein 2 (710 aa).

2 stretches are compositionally biased toward basic residues: residues 1–17 and 25–38; these read MGKV…KHLK and KEKI…GRRG. The interval 1–64 is disordered; the sequence is MGKVSKSTKK…QQLKKSAKEE (64 aa). Serine 70 bears the Phosphoserine mark. Positions 76-85 are enriched in basic and acidic residues; the sequence is EKGIEIPKEN. Disordered regions lie at residues 76 to 114, 138 to 169, and 672 to 710; these read EKGI…GQSM, FAGT…SEQM, and RLMR…MSDA. Positions 97–110 are enriched in acidic residues; it reads SDEDSSSSEEEEDM. Serine 149, serine 160, and serine 166 each carry phosphoserine. Basic and acidic residues-rich tracts occupy residues 156–169 and 672–691; these read AERN…SEQM and RLMR…EEAK. Over residues 697-710 the composition is skewed to acidic residues; the sequence is ESDDDNEDVEMSDA. A phosphoserine mark is found at serine 698 and serine 708.

The protein belongs to the NOC2 family. In terms of assembly, interacts with MAK21/NOC1 and NOC3. Forms a nucleolar complex with MAK21 that binds to 90S and 66S pre-ribosomes, as well as a nuclear complex with NOC3 that binds to 66S pre-ribosomes.

Its subcellular location is the nucleus. It localises to the nucleolus. Involved in the intranuclear transport of ribosomal precursors. The sequence is that of Nucleolar complex protein 2 (NOC2) from Saccharomyces cerevisiae (strain ATCC 204508 / S288c) (Baker's yeast).